A 316-amino-acid chain; its full sequence is Ribosomal RNA small subunit methyltransferase H (316 aa).

Residues 35 to 37 (GGH), aspartate 55, phenylalanine 79, aspartate 101, and glutamine 108 each bind S-adenosyl-L-methionine.

The protein belongs to the methyltransferase superfamily. RsmH family.

It is found in the cytoplasm. It catalyses the reaction cytidine(1402) in 16S rRNA + S-adenosyl-L-methionine = N(4)-methylcytidine(1402) in 16S rRNA + S-adenosyl-L-homocysteine + H(+). Its function is as follows. Specifically methylates the N4 position of cytidine in position 1402 (C1402) of 16S rRNA. The chain is Ribosomal RNA small subunit methyltransferase H from Vibrio campbellii (strain ATCC BAA-1116).